Reading from the N-terminus, the 78-residue chain is Small ribosomal subunit protein bS20 (78 aa).

This sequence belongs to the bacterial ribosomal protein bS20 family.

In terms of biological role, binds directly to 16S ribosomal RNA. The sequence is that of Small ribosomal subunit protein bS20 from Streptococcus pneumoniae serotype 2 (strain D39 / NCTC 7466).